The sequence spans 200 residues: MAITAQMVKELREKTGAGMMDCKKALEENGGSLEKAVDWLRQKGLSKAAKKAGRATSEGVIGNYIHSTGKIAVLVEVKCETDFVARNEKFQEFAKNVAMQIAANNPAAVDAESVDPAIIEREREVYRQKAREEGKPENIIEKIVEGGIKKFYKEICLLEQPYIRDDKMTIRDLLNDVIATLGENVTIGRFVRMQLGAEEA.

Positions 81-84 are involved in Mg(2+) ion dislocation from EF-Tu; that stretch reads TDFV.

The protein belongs to the EF-Ts family.

The protein localises to the cytoplasm. Associates with the EF-Tu.GDP complex and induces the exchange of GDP to GTP. It remains bound to the aminoacyl-tRNA.EF-Tu.GTP complex up to the GTP hydrolysis stage on the ribosome. The polypeptide is Elongation factor Ts (Nitratidesulfovibrio vulgaris (strain DSM 19637 / Miyazaki F) (Desulfovibrio vulgaris)).